The following is a 173-amino-acid chain: Flagellar biosynthetic protein FliV (173 aa).

The protein belongs to the FliB family.

Required for the secretion of flagellin and expression of motility. The sequence is that of Flagellar biosynthetic protein FliV (fliV) from Salmonella muenchen.